A 636-amino-acid chain; its full sequence is MNEWSIDDARAGYNVAHWSQGFYGISDEGEVTVSPDPKNPTFKIGLNALAKDMVKAGVSLPVLVRFPQILHHRVDHLCQMFNQAIQKYEYQSDYLLVYPIKVNQQQTVVEEILASQVSKTVPQLGLEAGSKPELMAVLAMAQKASSVIVCNGYKDKEYIRLALIGEKLGHSVYIVLEKMSELQMVLEESKKLGVTPRLGLRARLAFQGKGKWQASGGEKSKFGLSAAQILKVVERLKDEDMLESLQLLHFHLGSQIANIRDIRHGVGEAARFYCELRKLGAKVNCFDVGGGLAVDYDGTRSQSNNSMNYALAEYANNIVSVLTDVCNQNEQPMPRIISESGRYLTAHHAVLITDVIGTEAYSPEDIPAPEEEAPQLLHNMWRSWNEISSRLDQRALIEIFHDTQSDLAEAQSLFALGQLSLEDRAWAEQCNLAVCHELQGLMNARNRYQRPIIDELNEKLADRFFVNFSLFQSLPDAWGIDQVFPVLPLSGLDKVPERRAVMLDITCDSDGIVDQYVDGQGIETTLPVPNWSAEDPYLIGFFLVGAYQEILGDLHNLFGDTNSAVVRIDEEGQTNIESVLAGDTVADVLRYVNLDAVSFMRTYEELVNSHIAEDERAMILEELQVGLKGYTYLEDF.

Lys-101 is subject to N6-(pyridoxal phosphate)lysine. Position 286–296 (286–296 (FDVGGGLAVDY)) interacts with substrate.

This sequence belongs to the Orn/Lys/Arg decarboxylase class-II family. SpeA subfamily. Mg(2+) is required as a cofactor. Pyridoxal 5'-phosphate serves as cofactor.

The catalysed reaction is L-arginine + H(+) = agmatine + CO2. It functions in the pathway amine and polyamine biosynthesis; agmatine biosynthesis; agmatine from L-arginine: step 1/1. Catalyzes the biosynthesis of agmatine from arginine. This Shewanella amazonensis (strain ATCC BAA-1098 / SB2B) protein is Biosynthetic arginine decarboxylase.